The chain runs to 477 residues: Zinc metalloproteinase/disintegrin (477 aa).

Residues 1 to 20 (MIEVLLVTICLAAFPYQGSS) form the signal peptide. Residues 21 to 187 (IILESGNVND…PIKKASQSNL (167 aa)) constitute a propeptide that is removed on maturation. The Peptidase M12B domain occupies 193 to 389 (RYIELFLVVD…DNPQCILNKQ (197 aa)). Residues Glu196 and Asp280 each coordinate Ca(2+). 3 disulfide bridges follow: Cys304–Cys384, Cys344–Cys368, and Cys346–Cys351. Zn(2+) is bound at residue His329. Glu330 is an active-site residue. Zn(2+)-binding residues include His333 and His339. Ca(2+)-binding residues include Cys384 and Asn387. Positions 390–404 (LRTDTVSTPVSGKNF) are excised as a propeptide. One can recognise a Disintegrin domain in the interval 396-477 (STPVSGKNFG…AGCPRNPFHA (82 aa)). Cystine bridges form between Cys410-Cys425, Cys412-Cys420, Cys419-Cys442, Cys433-Cys439, Cys438-Cys463, and Cys451-Cys470. The short motif at 455–457 (RGD) is the Cell attachment site element.

It belongs to the venom metalloproteinase (M12B) family. P-II subfamily. P-IIa sub-subfamily. Monomer. Zn(2+) serves as cofactor. As to expression, expressed by the venom gland.

The protein localises to the secreted. Its activity is regulated as follows. Inhibited by 1,10-phenanthroline and EDTA. In terms of biological role, impairs hemostasis in the envenomed animal. Does not exhibit detectable plasminogen activating activity. Has hemagglutinating activity on red blood cells. Cleaves insulin B chain at '38-Ala-|-Leu-39' and '40-Tyr-|-Leu-41' bonds. Its function is as follows. This recombinant protein shows high inhibitory activity on collagen-induced platelet aggregation. This chain is Zinc metalloproteinase/disintegrin, found in Bothrops jararaca (Jararaca).